The chain runs to 333 residues: Quinolinate synthase (333 aa).

H41 and S58 together coordinate iminosuccinate. Position 103 (C103) interacts with [4Fe-4S] cluster. Residues Y129 to N131 and S146 contribute to the iminosuccinate site. [4Fe-4S] cluster is bound at residue C189. Iminosuccinate-binding positions include H215–E217 and T232. Residue C282 participates in [4Fe-4S] cluster binding.

It belongs to the quinolinate synthase family. Type 2 subfamily. [4Fe-4S] cluster serves as cofactor.

The protein localises to the cytoplasm. It catalyses the reaction iminosuccinate + dihydroxyacetone phosphate = quinolinate + phosphate + 2 H2O + H(+). It participates in cofactor biosynthesis; NAD(+) biosynthesis; quinolinate from iminoaspartate: step 1/1. Catalyzes the condensation of iminoaspartate with dihydroxyacetone phosphate to form quinolinate. The polypeptide is Quinolinate synthase (Prochlorococcus marinus (strain MIT 9313)).